A 1320-amino-acid chain; its full sequence is FERM and PDZ domain-containing protein 4 (1320 aa).

The WW domain occupies 33–66; sequence QVPPYGWEMMTNRDGRDYFINHMTQAIPFDDPRF. Residues 78-155 form the PDZ domain; the sequence is KVEMRRDPVL…SILLTVIQPY (78 aa). An FERM domain is found at 204-519; sequence NVLKVYLENG…GYYRLLVDSR (316 aa). 6 disordered regions span residues 809–847, 897–927, 949–981, 1024–1050, 1114–1139, and 1204–1274; these read APPP…EIPV, YSPE…QKQS, TEFP…PPKV, KRKS…QQGT, PRGP…ADDA, and GHFS…ATFE. Positions 900–913 are enriched in low complexity; that stretch reads ESSSDSGNETNSSE. The segment covering 1204–1217 has biased composition (polar residues); that stretch reads GHFSLQSSQGSSVD. Low complexity predominate over residues 1223 to 1232; the sequence is GSSSSACATP.

As to quaternary structure, interacts (via C-terminus) with DLG1, DLG2, DLG3 and DLG4/PSD95. Interacts (via N-terminus) with ARHGEF7; the interaction is mediated by the PDZ domain. Interacts with GPSM2 (via TPR repeat region). As to expression, expressed in various regions of the brain, including cortex, hippocampus, cerebellum, olfactory bulb and medial habenular nucleus.

The protein resides in the cell projection. It is found in the dendritic spine. Positive regulator of dendritic spine morphogenesis and density. Required for the maintenance of excitatory synaptic transmission. Binds phosphatidylinositol 4,5-bisphosphate. This chain is FERM and PDZ domain-containing protein 4 (Frmpd4), found in Mus musculus (Mouse).